Here is a 534-residue protein sequence, read N- to C-terminus: Cargo protein 2 (534 aa).

As to quaternary structure, homododecamer. Localizes inside the capsid.

It localises to the virion. Functionally, protein that is stored in high quantity in the viral capsid and may play a role during ejection. The sequence is that of Cargo protein 2 from Bacteroides intestinalis (Bacteroides phage PhiCrAss001).